A 161-amino-acid polypeptide reads, in one-letter code: ATP synthase subunit b 1 (161 aa).

Residues 3-23 (FDASFFALVGLVLFFVLIAYL) traverse the membrane as a helical segment.

The protein belongs to the ATPase B chain family. In terms of assembly, F-type ATPases have 2 components, F(1) - the catalytic core - and F(0) - the membrane proton channel. F(1) has five subunits: alpha(3), beta(3), gamma(1), delta(1), epsilon(1). F(0) has three main subunits: a(1), b(2) and c(10-14). The alpha and beta chains form an alternating ring which encloses part of the gamma chain. F(1) is attached to F(0) by a central stalk formed by the gamma and epsilon chains, while a peripheral stalk is formed by the delta and b chains.

The protein localises to the cell inner membrane. In terms of biological role, f(1)F(0) ATP synthase produces ATP from ADP in the presence of a proton or sodium gradient. F-type ATPases consist of two structural domains, F(1) containing the extramembraneous catalytic core and F(0) containing the membrane proton channel, linked together by a central stalk and a peripheral stalk. During catalysis, ATP synthesis in the catalytic domain of F(1) is coupled via a rotary mechanism of the central stalk subunits to proton translocation. Its function is as follows. Component of the F(0) channel, it forms part of the peripheral stalk, linking F(1) to F(0). This chain is ATP synthase subunit b 1, found in Agrobacterium fabrum (strain C58 / ATCC 33970) (Agrobacterium tumefaciens (strain C58)).